The chain runs to 606 residues: NADH-ubiquinone oxidoreductase chain 5 (606 aa).

A run of 16 helical transmembrane segments spans residues 1 to 21 (MNLFTSFTLLTLLILTTPIMM), 35 to 55 (YVKNIVFCAFITSLVPAMVYL), 87 to 107 (LMFMPVALFITWSIMEFSMWY), 114 to 134 (INQFFKYLLLFLITMLILVTA), 140 to 160 (LFIGWEGVGIMSFLLIGWWFG), 171 to 191 (AILYNRIGDIGLLASMAWFLS), 211 to 233 (FPLMGLVLAAAGKSAQFGLHPWL), 241 to 261 (TPVSALLHSSTMVVAGIFLLV), 272 to 292 (LIQTVTLCLGAITTLFTAICA), 301 to 320 (IIAFSTSSQLGLMMVTIGLN), 325 to 347 (AFLHICTHAFFKAMLFLCSGSII), 366 to 386 (LPFTTTALIIGCLALTGMPFL), 413 to 433 (LIATSLTAVYSTRIIFFALLG), 457 to 477 (LLVGSIFAGFILSNSIPPMTT), 482 to 502 (MPLHLKLTALAMTTLGFIIAF), and 582 to 602 (GLIKLYFLSFLITITLSMILF).

The protein belongs to the complex I subunit 5 family. As to quaternary structure, core subunit of respiratory chain NADH dehydrogenase (Complex I) which is composed of 45 different subunits.

The protein localises to the mitochondrion inner membrane. It carries out the reaction a ubiquinone + NADH + 5 H(+)(in) = a ubiquinol + NAD(+) + 4 H(+)(out). Functionally, core subunit of the mitochondrial membrane respiratory chain NADH dehydrogenase (Complex I) which catalyzes electron transfer from NADH through the respiratory chain, using ubiquinone as an electron acceptor. Essential for the catalytic activity and assembly of complex I. This Balaenoptera physalus (Fin whale) protein is NADH-ubiquinone oxidoreductase chain 5 (MT-ND5).